The following is a 337-amino-acid chain: Heat-inducible transcription repressor HrcA (337 aa).

This sequence belongs to the HrcA family.

Its function is as follows. Negative regulator of class I heat shock genes (grpE-dnaK-dnaJ and groELS operons). Prevents heat-shock induction of these operons. The protein is Heat-inducible transcription repressor HrcA of Arthrobacter sp. (strain FB24).